The chain runs to 266 residues: Type III pantothenate kinase (266 aa).

15-22 (EIGNSSTS) contacts ATP. Substrate-binding positions include tyrosine 105 and 112-115 (GADR). Aspartate 114 functions as the Proton acceptor in the catalytic mechanism. Aspartate 135 contacts K(+). Threonine 138 lines the ATP pocket. Residue threonine 191 coordinates substrate.

This sequence belongs to the type III pantothenate kinase family. As to quaternary structure, homodimer. The cofactor is NH4(+). K(+) serves as cofactor.

The protein localises to the cytoplasm. It carries out the reaction (R)-pantothenate + ATP = (R)-4'-phosphopantothenate + ADP + H(+). Its pathway is cofactor biosynthesis; coenzyme A biosynthesis; CoA from (R)-pantothenate: step 1/5. Its function is as follows. Catalyzes the phosphorylation of pantothenate (Pan), the first step in CoA biosynthesis. This chain is Type III pantothenate kinase, found in Chlorobium chlorochromatii (strain CaD3).